Consider the following 1562-residue polypeptide: DNA-directed RNA polymerase subunit beta'' (1562 aa).

Residues 1–22 (MVKKKKFKTKNIQNPPFSSQNS) form a disordered region. A compositionally biased stretch (polar residues) spans 11 to 22 (NIQNPPFSSQNS). Residues C275, C338, C345, and C348 each contribute to the Zn(2+) site.

This sequence belongs to the RNA polymerase beta' chain family. RpoC2 subfamily. In plastids the minimal PEP RNA polymerase catalytic core is composed of four subunits: alpha, beta, beta', and beta''. When a (nuclear-encoded) sigma factor is associated with the core the holoenzyme is formed, which can initiate transcription. Requires Zn(2+) as cofactor.

It localises to the plastid. It is found in the chloroplast. It catalyses the reaction RNA(n) + a ribonucleoside 5'-triphosphate = RNA(n+1) + diphosphate. In terms of biological role, DNA-dependent RNA polymerase catalyzes the transcription of DNA into RNA using the four ribonucleoside triphosphates as substrates. The protein is DNA-directed RNA polymerase subunit beta'' of Chlorella vulgaris (Green alga).